Reading from the N-terminus, the 896-residue chain is Putative mannosylglycerate hydrolase (896 aa).

His12, Asp14, Asp125, and His348 together coordinate a divalent metal cation. Asp125 acts as the Nucleophile in catalysis.

This sequence belongs to the glycosyl hydrolase 38 family. It depends on a divalent metal cation as a cofactor.

The catalysed reaction is (2R)-2-O-(6-phospho-alpha-D-mannosyl)-glycerate + H2O = alpha-D-mannose 6-phosphate + (R)-glycerate. May hydrolyze 6-phospho-mannosyl-D-glycerate to mannose-6-phosphate and glycerate. The chain is Putative mannosylglycerate hydrolase (mngB) from Halalkalibacterium halodurans (strain ATCC BAA-125 / DSM 18197 / FERM 7344 / JCM 9153 / C-125) (Bacillus halodurans).